The following is a 160-amino-acid chain: Large ribosomal subunit protein eL21 (160 aa).

It belongs to the eukaryotic ribosomal protein eL21 family. Component of the large ribosomal subunit. Mature ribosomes consist of a small (40S) and a large (60S) subunit. The 40S subunit contains about 32 different proteins and 1 molecule of RNA (18S). The 60S subunit contains 45 different proteins and 3 molecules of RNA (25S, 5.8S and 5S).

The protein resides in the cytoplasm. Component of the ribosome, a large ribonucleoprotein complex responsible for the synthesis of proteins in the cell. The small ribosomal subunit (SSU) binds messenger RNAs (mRNAs) and translates the encoded message by selecting cognate aminoacyl-transfer RNA (tRNA) molecules. The large subunit (LSU) contains the ribosomal catalytic site termed the peptidyl transferase center (PTC), which catalyzes the formation of peptide bonds, thereby polymerizing the amino acids delivered by tRNAs into a polypeptide chain. The nascent polypeptides leave the ribosome through a tunnel in the LSU and interact with protein factors that function in enzymatic processing, targeting, and the membrane insertion of nascent chains at the exit of the ribosomal tunnel. In Candida albicans (strain SC5314 / ATCC MYA-2876) (Yeast), this protein is Large ribosomal subunit protein eL21.